The following is a 325-amino-acid chain: Tetraacyldisaccharide 4'-kinase (325 aa).

58–65 (TVGGSGKT) provides a ligand contact to ATP.

Belongs to the LpxK family.

The catalysed reaction is a lipid A disaccharide + ATP = a lipid IVA + ADP + H(+). It participates in glycolipid biosynthesis; lipid IV(A) biosynthesis; lipid IV(A) from (3R)-3-hydroxytetradecanoyl-[acyl-carrier-protein] and UDP-N-acetyl-alpha-D-glucosamine: step 6/6. Its function is as follows. Transfers the gamma-phosphate of ATP to the 4'-position of a tetraacyldisaccharide 1-phosphate intermediate (termed DS-1-P) to form tetraacyldisaccharide 1,4'-bis-phosphate (lipid IVA). The protein is Tetraacyldisaccharide 4'-kinase of Coxiella burnetii (strain Dugway 5J108-111).